The sequence spans 182 residues: Nucleoid-associated protein At2g24020, chloroplastic (182 aa).

Residues 1-48 (MASMAATTNFTKSMLFPFSHVSGNASLNSQRRTWPKQYKSKNGYRSLR) constitute a chloroplast transit peptide.

Belongs to the YbaB/EbfC family. Homodimer. Interacts with ALB3 and ALB4.

It localises to the plastid. It is found in the chloroplast stroma. Its function is as follows. Participates with ALB4 in thylakoid protein targeting. May function with specific subset of thylakoidal proteins. Binds to DNA and alters its conformation. May be involved in regulation of gene expression, nucleoid organization and DNA protection. This Arabidopsis thaliana (Mouse-ear cress) protein is Nucleoid-associated protein At2g24020, chloroplastic.